The chain runs to 230 residues: Sodium channel modifier 1 (230 aa).

At S2 the chain carries Phosphoserine. Positions 4-20 (KREGDDWSQLNVLKKRR) match the Bipartite nuclear localization signal motif. The Matrin-type zinc finger occupies 42 to 74 (FACAICPHRPVLDTLAMLTAHRAGKKHLSSLQL). Residue K67 forms a Glycyl lysine isopeptide (Lys-Gly) (interchain with G-Cter in SUMO2) linkage. 3 disordered regions span residues 76-106 (YGKKQPGKERKQNPKHQNELRREETKAEAPL), 129-186 (RRKY…SPTR), and 200-230 (GWIPDGRGRWVKDENVEFDSDEEEPPDLPLD). The span at 81–102 (PGKERKQNPKHQNELRREETKA) shows a compositional bias: basic and acidic residues. S144 carries the phosphoserine modification. Residues 164–174 (PAAGPQAEESA) show a composition bias toward low complexity. S183 is modified (phosphoserine). Positions 188 to 230 (RALDHYLTLRSSGWIPDGRGRWVKDENVEFDSDEEEPPDLPLD) are required for interaction with LUC7L2. Basic and acidic residues predominate over residues 205-214 (GRGRWVKDEN). A compositionally biased stretch (acidic residues) spans 215-230 (VEFDSDEEEPPDLPLD). Phosphoserine is present on S219.

As to quaternary structure, component of the minor spliceosome, which splices U12-type introns. Within this complex, interacts with RNF113A, as well as with SF3B1/SF3b155, SF3B2/SF3b145, SF3B3/SF3b130 and CDC5L. May interact with LUC7L2 and SNRNP70.

It localises to the nucleus. Its subcellular location is the nucleoplasm. The protein resides in the nucleus speckle. As a component of the minor spliceosome, involved in the splicing of U12-type introns in pre-mRNAs. Plays a role in the regulation of primary cilia length and Hedgehog signaling. The chain is Sodium channel modifier 1 (SCNM1) from Homo sapiens (Human).